The primary structure comprises 398 residues: Cytochrome b (398 aa).

A helical transmembrane segment spans residues 45–65 (LGSIAGIALVIQIITGVILAM). Residues histidine 95 and histidine 109 each contribute to the heme b site. Helical transmembrane passes span 96 to 116 (AVGA…GLYY), 129 to 149 (IGII…VLPW), 164 to 184 (FSAI…GFSV), 192 to 212 (FFAL…LHLV), 245 to 265 (FVGF…APNY), 277 to 297 (PLVT…YAIL), 304 to 324 (LGGV…PWLD), 339 to 359 (IAFW…SKPV), and 366 to 386 (ISRF…PLIG). Histidine 196 and histidine 210 together coordinate heme b.

Belongs to the cytochrome b family. As to quaternary structure, the main subunits of complex b-c1 are: cytochrome b, cytochrome c1 and the Rieske protein. Requires heme b as cofactor.

Its subcellular location is the cell membrane. In terms of biological role, component of the ubiquinol-cytochrome c reductase complex (complex III or cytochrome b-c1 complex), which is a respiratory chain that generates an electrochemical potential coupled to ATP synthesis. This chain is Cytochrome b (petB), found in Rickettsia prowazekii (strain Madrid E).